The primary structure comprises 199 residues: Small ribosomal subunit protein uS4 (199 aa).

One can recognise an S4 RNA-binding domain in the interval 91 to 151 (SRLDNLVYRF…EKSKNVKAIA (61 aa)).

Belongs to the universal ribosomal protein uS4 family. As to quaternary structure, part of the 30S ribosomal subunit. Contacts protein S5. The interaction surface between S4 and S5 is involved in control of translational fidelity.

Functionally, one of the primary rRNA binding proteins, it binds directly to 16S rRNA where it nucleates assembly of the body of the 30S subunit. With S5 and S12 plays an important role in translational accuracy. The sequence is that of Small ribosomal subunit protein uS4 from Exiguobacterium sp. (strain ATCC BAA-1283 / AT1b).